The sequence spans 437 residues: Protein translocase subunit SecY (437 aa).

The next 10 membrane-spanning stretches (helical) occupy residues 19–39 (LFTL…APGV), 68–88 (LLQI…SIIL), 121–141 (VALA…GALF), 156–176 (IFTT…VMWL), 188–208 (GMSI…LWAI), 218–238 (WIEF…VVFV), 274–294 (GVIP…IVQF), 317–337 (YIAT…AISF), 378–398 (SLYL…FGGA), and 400–420 (QNFP…LETV).

Belongs to the SecY/SEC61-alpha family. As to quaternary structure, component of the Sec protein translocase complex. Heterotrimer consisting of SecY, SecE and SecG subunits. The heterotrimers can form oligomers, although 1 heterotrimer is thought to be able to translocate proteins. Interacts with the ribosome. Interacts with SecDF, and other proteins may be involved. Interacts with SecA.

It is found in the cell membrane. Functionally, the central subunit of the protein translocation channel SecYEG. Consists of two halves formed by TMs 1-5 and 6-10. These two domains form a lateral gate at the front which open onto the bilayer between TMs 2 and 7, and are clamped together by SecE at the back. The channel is closed by both a pore ring composed of hydrophobic SecY resides and a short helix (helix 2A) on the extracellular side of the membrane which forms a plug. The plug probably moves laterally to allow the channel to open. The ring and the pore may move independently. This Streptomyces griseus protein is Protein translocase subunit SecY.